The primary structure comprises 333 residues: Glycerol-3-phosphate dehydrogenase [NAD(P)+] (333 aa).

NADPH is bound by residues tryptophan 16, arginine 36, and lysine 109. Sn-glycerol 3-phosphate-binding residues include lysine 109, glycine 137, and serine 139. Alanine 141 is a binding site for NADPH. 5 residues coordinate sn-glycerol 3-phosphate: lysine 192, aspartate 245, serine 255, arginine 256, and asparagine 257. Lysine 192 acts as the Proton acceptor in catalysis. Arginine 256 provides a ligand contact to NADPH. Residues valine 280 and glutamate 282 each coordinate NADPH.

It belongs to the NAD-dependent glycerol-3-phosphate dehydrogenase family.

It is found in the cytoplasm. It carries out the reaction sn-glycerol 3-phosphate + NAD(+) = dihydroxyacetone phosphate + NADH + H(+). The enzyme catalyses sn-glycerol 3-phosphate + NADP(+) = dihydroxyacetone phosphate + NADPH + H(+). Its pathway is membrane lipid metabolism; glycerophospholipid metabolism. Catalyzes the reduction of the glycolytic intermediate dihydroxyacetone phosphate (DHAP) to sn-glycerol 3-phosphate (G3P), the key precursor for phospholipid synthesis. This Parvibaculum lavamentivorans (strain DS-1 / DSM 13023 / NCIMB 13966) protein is Glycerol-3-phosphate dehydrogenase [NAD(P)+].